A 365-amino-acid chain; its full sequence is Chaperone protein DnaJ (365 aa).

The J domain maps to 4–70 (DYYKILGVDR…EKRRIYDQTG (67 aa)). Residues 139–220 (GTEKRIKFRR…CNGTGTIVVD (82 aa)) form a CR-type zinc finger. Zn(2+) is bound by residues Cys152, Cys155, Cys168, Cys171, Cys194, Cys197, Cys208, and Cys211. CXXCXGXG motif repeat units follow at residues 152 to 159 (CPDCKGTG), 168 to 175 (CPTCHGTG), 194 to 201 (CNTCGGKG), and 208 to 215 (CPRCNGTG).

The protein belongs to the DnaJ family. As to quaternary structure, homodimer. Zn(2+) serves as cofactor.

It localises to the cytoplasm. Its function is as follows. Participates actively in the response to hyperosmotic and heat shock by preventing the aggregation of stress-denatured proteins and by disaggregating proteins, also in an autonomous, DnaK-independent fashion. Unfolded proteins bind initially to DnaJ; upon interaction with the DnaJ-bound protein, DnaK hydrolyzes its bound ATP, resulting in the formation of a stable complex. GrpE releases ADP from DnaK; ATP binding to DnaK triggers the release of the substrate protein, thus completing the reaction cycle. Several rounds of ATP-dependent interactions between DnaJ, DnaK and GrpE are required for fully efficient folding. Also involved, together with DnaK and GrpE, in the DNA replication of plasmids through activation of initiation proteins. In Thermoplasma volcanium (strain ATCC 51530 / DSM 4299 / JCM 9571 / NBRC 15438 / GSS1), this protein is Chaperone protein DnaJ.